A 310-amino-acid chain; its full sequence is Protease HtpX homolog (310 aa).

Transmembrane regions (helical) follow at residues 7 to 27 (SVML…LIGG) and 29 to 49 (AGMT…YWYS). Position 131 (H131) interacts with Zn(2+). The active site involves E132. A Zn(2+)-binding site is contributed by H135. 2 helical membrane passes run 141 to 161 (ILIG…ASMA) and 178 to 198 (PLGF…AALI). Residue E207 participates in Zn(2+) binding. The segment at 277–310 (LTGARPQSGGAPSGPERTARNAEDSAKDFWDSLK) is disordered. Over residues 293–310 (RTARNAEDSAKDFWDSLK) the composition is skewed to basic and acidic residues.

This sequence belongs to the peptidase M48B family. Zn(2+) is required as a cofactor.

Its subcellular location is the cell inner membrane. The sequence is that of Protease HtpX homolog from Desulfatibacillum aliphaticivorans.